A 315-amino-acid chain; its full sequence is Olfactory receptor 4K3 (315 aa).

The Extracellular segment spans residues 1-25 (MAWSNQSAVTEFILRGLSSSLELQI). An N-linked (GlcNAc...) asparagine glycan is attached at asparagine 5. Residues 26–49 (FYFLFFSIVYAATVLGNLLIVVTI) form a helical membrane-spanning segment. Over 50–57 (ASEPHLHS) the chain is Cytoplasmic. The chain crosses the membrane as a helical span at residues 58-79 (PMYFLLGNLSFIDMSLASFATP). Residues 80–100 (KMIADFLREHKAISFEGCMTQ) are Extracellular-facing. A disulfide bridge connects residues cysteine 97 and cysteine 189. Residues 101 to 120 (MFFLHLLGGAEIVLLISMSF) traverse the membrane as a helical segment. Residues 121 to 139 (DRYVAICKPLHYLTIMSRR) lie on the Cytoplasmic side of the membrane. Residues 140–158 (MCVGLVILSWIVGIFHALS) traverse the membrane as a helical segment. At 159 to 195 (QLAFTVNLPFCGPNEVDSFFCDLPLVIKLACVDTYIL) the chain is on the extracellular side. Residues 196–219 (GVFMISTSGMIALVCFILLVISYT) traverse the membrane as a helical segment. At 220–235 (IILVTVRQRSSGGSSK) the chain is on the cytoplasmic side. The chain crosses the membrane as a helical span at residues 236 to 258 (ALSTCSAHFTVVTLFFGPCTFIY). Residues 259-269 (VWPFTNFPIDK) are Extracellular-facing. The helical transmembrane segment at 270–289 (VLSVFYTIYTPLLNPVIYTV) threads the bilayer. At 290–315 (RNKDVKYSMRKLSSHIFKSRKTDHTP) the chain is on the cytoplasmic side.

The protein belongs to the G-protein coupled receptor 1 family.

Its subcellular location is the cell membrane. Functionally, odorant receptor. The sequence is that of Olfactory receptor 4K3 (OR4K3) from Homo sapiens (Human).